The following is a 310-amino-acid chain: Lymphotoxin-beta (310 aa).

The Cytoplasmic segment spans residues 1–27 (MGALGLQGRGGRPQGTGCLLLAVAGAT). A helical; Signal-anchor for type II membrane protein transmembrane segment spans residues 28-48 (SLVTLLLAVPITVLAVLALVP). The Extracellular segment spans residues 49–310 (QEQGGLVMES…LGKCLHSANV (262 aa)). Residues 67–86 (QGLSKSNGLPSRLHSQIPSS) form a disordered region. The region spanning 138 to 293 (PAAHLIGAWM…GKTFFGAVMV (156 aa)) is the THD domain. A glycan (N-linked (GlcNAc...) asparagine) is linked at Asn272.

Belongs to the tumor necrosis factor family. Heterotrimer of either two LTB and one LTA subunits or (less prevalent) two LTA and one LTB subunits.

The protein resides in the membrane. Its function is as follows. Cytokine that binds to LTBR/TNFRSF3. May play a specific role in immune response regulation. Provides the membrane anchor for the attachment of the heterotrimeric complex to the cell surface. In Marmota monax (Woodchuck), this protein is Lymphotoxin-beta (LTB).